The following is an 89-amino-acid chain: Elongation factor 1-beta (89 aa).

Belongs to the EF-1-beta/EF-1-delta family.

Its function is as follows. Promotes the exchange of GDP for GTP in EF-1-alpha/GDP, thus allowing the regeneration of EF-1-alpha/GTP that could then be used to form the ternary complex EF-1-alpha/GTP/AAtRNA. This Methanothermobacter thermautotrophicus (strain ATCC 29096 / DSM 1053 / JCM 10044 / NBRC 100330 / Delta H) (Methanobacterium thermoautotrophicum) protein is Elongation factor 1-beta (ef1b).